We begin with the raw amino-acid sequence, 195 residues long: Inhibitor of glycogen debranching 1 (195 aa).

Residues 1–18 are compositionally biased toward polar residues; that stretch reads MTDPHLNTPQVSTSPTFE. The tract at residues 1–101 is disordered; the sequence is MTDPHLNTPQ…ERRSSGPMDF (101 aa). A Phosphoserine modification is found at Ser-64. At Thr-65 the chain carries Phosphothreonine. Residues 75–95 show a composition bias toward basic and acidic residues; the sequence is EQARERESSIGEHAPGAERRS. A phosphoserine mark is found at Ser-95 and Ser-96. Thr-132 carries the phosphothreonine modification. Positions 146 to 175 are disordered; it reads NSYLDNNSNGNSARVPHGSPPQLGTRRKSS. A compositionally biased stretch (polar residues) spans 148-157; that stretch reads YLDNNSNGNS. Ser-164 is modified (phosphoserine).

Interacts with GDB1.

Its subcellular location is the cytoplasm. Functionally, acts as an inhibitor of GDB1, enhancing the ability of cells to store glucose as glycogen. This chain is Inhibitor of glycogen debranching 1 (IGD1), found in Saccharomyces cerevisiae (strain ATCC 204508 / S288c) (Baker's yeast).